The primary structure comprises 483 residues: Probable ATP-dependent RNA helicase DDX49 (483 aa).

Residues 2–30 (AGFAELGLSSWLVEQCRQLGLKQPTPVQL) carry the Q motif motif. The region spanning 33–207 (IPAILEGRDC…GLATNQPFFW (175 aa)) is the Helicase ATP-binding domain. ATP is bound at residue 46–53 (AKTGSGKT). Positions 152–155 (DEAD) match the DEAD box motif. Positions 218-382 (QLDQRYLLVP…EFSVEEAEVL (165 aa)) constitute a Helicase C-terminal domain. The segment at 444–483 (KEKVEETLKRQKAGRAGHKGRPPRTPSGSHSGPVPSQGLV) is disordered. Positions 453–465 (RQKAGRAGHKGRP) are enriched in basic residues.

This sequence belongs to the DEAD box helicase family. DDX49/DBP8 subfamily.

It is found in the nucleus. The protein localises to the nucleolus. It catalyses the reaction ATP + H2O = ADP + phosphate + H(+). Its function is as follows. ATP-dependent RNA helicase that plays a role in various aspects of RNA metabolism including the regulation of mRNA export and the levels of pre-ribosomal RNA. Regulates the stability and synthesis of pre-ribosomal RNA and thereby regulates cell proliferation. Also possesses antiviral activity by recognizing gammaherpesvirus transcripts in the context of lytic reactivation. The polypeptide is Probable ATP-dependent RNA helicase DDX49 (DDX49) (Homo sapiens (Human)).